Consider the following 150-residue polypeptide: Protein A151R (150 aa).

It belongs to the asfivirus A151R family. In terms of assembly, monomer. Homodimer. Interacts with protein B119L. Interacts with membrane protein E248R. The cofactor is Zn(2+).

Functionally, may participate in a redox cascade for the formation of disulfide bonds in viral proteins. The polypeptide is Protein A151R (African swine fever virus (isolate Tick/Malawi/Lil 20-1/1983) (ASFV)).